The primary structure comprises 327 residues: Aromatase (327 aa).

Heme is bound at residue Cys315.

This sequence belongs to the cytochrome P450 family. Heme is required as a cofactor.

Its subcellular location is the membrane. The enzyme catalyses testosterone + 3 reduced [NADPH--hemoprotein reductase] + 3 O2 = 17beta-estradiol + formate + 3 oxidized [NADPH--hemoprotein reductase] + 4 H2O + 4 H(+). The catalysed reaction is androst-4-ene-3,17-dione + 3 reduced [NADPH--hemoprotein reductase] + 3 O2 = estrone + formate + 3 oxidized [NADPH--hemoprotein reductase] + 4 H2O + 4 H(+). Functionally, catalyzes the formation of aromatic C18 estrogens from C19 androgens. This chain is Aromatase (CYP19A1), found in Coturnix japonica (Japanese quail).